Reading from the N-terminus, the 61-residue chain is uncharacterized protein (61 aa).

This is an uncharacterized protein from Bacillus subtilis (strain 168).